A 417-amino-acid chain; its full sequence is NADH-quinone oxidoreductase subunit D (417 aa).

Belongs to the complex I 49 kDa subunit family. NDH-1 is composed of 14 different subunits. Subunits NuoB, C, D, E, F, and G constitute the peripheral sector of the complex.

The protein localises to the cell inner membrane. It catalyses the reaction a quinone + NADH + 5 H(+)(in) = a quinol + NAD(+) + 4 H(+)(out). In terms of biological role, NDH-1 shuttles electrons from NADH, via FMN and iron-sulfur (Fe-S) centers, to quinones in the respiratory chain. The immediate electron acceptor for the enzyme in this species is believed to be ubiquinone. Couples the redox reaction to proton translocation (for every two electrons transferred, four hydrogen ions are translocated across the cytoplasmic membrane), and thus conserves the redox energy in a proton gradient. The polypeptide is NADH-quinone oxidoreductase subunit D (Dechloromonas aromatica (strain RCB)).